A 131-amino-acid chain; its full sequence is Holo-[acyl-carrier-protein] synthase (131 aa).

Mg(2+) is bound by residues aspartate 8 and glutamate 59.

The protein belongs to the P-Pant transferase superfamily. AcpS family. Mg(2+) serves as cofactor.

Its subcellular location is the cytoplasm. The enzyme catalyses apo-[ACP] + CoA = holo-[ACP] + adenosine 3',5'-bisphosphate + H(+). In terms of biological role, transfers the 4'-phosphopantetheine moiety from coenzyme A to a Ser of acyl-carrier-protein. In Rickettsia rickettsii (strain Iowa), this protein is Holo-[acyl-carrier-protein] synthase.